Consider the following 201-residue polypeptide: Cytochrome c oxidase assembly protein CtaG (201 aa).

The Cytoplasmic segment spans residues Met-1–Arg-13. Residues Ser-14 to Ser-36 form a helical; Signal-anchor for type II membrane protein membrane-spanning segment. The Periplasmic portion of the chain corresponds to Val-37 to Gly-201.

The protein belongs to the COX11/CtaG family.

It localises to the cell inner membrane. In terms of biological role, exerts its effect at some terminal stage of cytochrome c oxidase synthesis, probably by being involved in the insertion of the copper B into subunit I. The polypeptide is Cytochrome c oxidase assembly protein CtaG (Brucella suis (strain ATCC 23445 / NCTC 10510)).